The following is a 406-amino-acid chain: Exodeoxyribonuclease 7 large subunit (406 aa).

It belongs to the XseA family. In terms of assembly, heterooligomer composed of large and small subunits.

It localises to the cytoplasm. The enzyme catalyses Exonucleolytic cleavage in either 5'- to 3'- or 3'- to 5'-direction to yield nucleoside 5'-phosphates.. Its function is as follows. Bidirectionally degrades single-stranded DNA into large acid-insoluble oligonucleotides, which are then degraded further into small acid-soluble oligonucleotides. The polypeptide is Exodeoxyribonuclease 7 large subunit (Desulfitobacterium hafniense (strain Y51)).